The sequence spans 447 residues: MGEDTDTRKINHSFLRDHSYVTEADIISTVEFNHTGELLATGDKGGRVVIFQREPESKNAPHSQGEYDVYSTFQSHEPEFDYLKSLEIEEKINKIKWLPQQNAAHSLLSTNDKTIKLWKITERDKRPEGYNLKDEEGKLKDLSTVTSLQVPVLKPMDLMVEVSPRRIFANGHTYHINSISVNSDCETYMSADDLRINLWHLAVTDRSFNIVDIKPANMEDLTEVITASEFHPHHCNLFVYSSSKGSLRLCDMRAAALCDKHSKLFEEPEDPSNRSFFSEIISSVSDVKFSHSGRYMLTRDYLTVKVWDLNMEARPIETYQVHDYLRSKLCSLYENDCIFDKFECAWNGSDSVIMTGAYNNFFRMFDRNTKRDVTLEASRESSKPRAVLKPRRVCVGGKRRRDDISVDSLDFTKKILHTAWHPAENIIAIAATNNLYIFQDKVNSDVH.

WD repeat units follow at residues 22-61 (TEAD…KNAP), 87-128 (EIEE…KRPE), 171-209 (GHTY…RSFN), 220-260 (DLTE…LCDK), 279-317 (EIIS…RPIE), 334-375 (ENDC…DVTL), and 410-446 (DFTK…NSDV).

It belongs to the phosphatase 2A regulatory subunit B family. PP2A consists of a common heterodimeric core enzyme, composed of a 36 kDa catalytic subunit (subunit C) and a 65 kDa constant regulatory subunit (PR65 or subunit A), that associates with a variety of regulatory subunits. Proteins that associate with the core dimer include three families of regulatory subunits B (the R2/B/PR55/B55, R3/B''/PR72/PR130/PR59 and R5/B'/B56 families), the 48 kDa variable regulatory subunit, viral proteins, and cell signaling molecules. Interacts with IER5. In terms of tissue distribution, highly expressed in brain.

In terms of biological role, the B regulatory subunit might modulate substrate selectivity and catalytic activity, and might also direct the localization of the catalytic enzyme to a particular subcellular compartment. The protein is Serine/threonine-protein phosphatase 2A 55 kDa regulatory subunit B gamma isoform (PPP2R2C) of Oryctolagus cuniculus (Rabbit).